The sequence spans 235 residues: Segregation and condensation protein A (235 aa).

It belongs to the ScpA family. Component of a cohesin-like complex composed of ScpA, ScpB and the Smc homodimer, in which ScpA and ScpB bind to the head domain of Smc. The presence of the three proteins is required for the association of the complex with DNA.

It localises to the cytoplasm. Its function is as follows. Participates in chromosomal partition during cell division. May act via the formation of a condensin-like complex containing Smc and ScpB that pull DNA away from mid-cell into both cell halves. In Streptococcus equi subsp. equi (strain 4047), this protein is Segregation and condensation protein A.